Consider the following 691-residue polypeptide: DNA ligase (691 aa).

NAD(+)-binding positions include 56–60, 104–105, and Glu139; these read DRAYD and SI. The N6-AMP-lysine intermediate role is filled by Lys141. Arg162, Glu198, Lys314, and Lys338 together coordinate NAD(+). Zn(2+)-binding residues include Cys429, Cys432, Cys445, and Cys451. The BRCT domain occupies 607 to 691; it reads TAGDALSGQT…SLLESHGIEI (85 aa).

This sequence belongs to the NAD-dependent DNA ligase family. LigA subfamily. It depends on Mg(2+) as a cofactor. The cofactor is Mn(2+).

It carries out the reaction NAD(+) + (deoxyribonucleotide)n-3'-hydroxyl + 5'-phospho-(deoxyribonucleotide)m = (deoxyribonucleotide)n+m + AMP + beta-nicotinamide D-nucleotide.. In terms of biological role, DNA ligase that catalyzes the formation of phosphodiester linkages between 5'-phosphoryl and 3'-hydroxyl groups in double-stranded DNA using NAD as a coenzyme and as the energy source for the reaction. It is essential for DNA replication and repair of damaged DNA. The polypeptide is DNA ligase (Natronomonas pharaonis (strain ATCC 35678 / DSM 2160 / CIP 103997 / JCM 8858 / NBRC 14720 / NCIMB 2260 / Gabara) (Halobacterium pharaonis)).